Here is a 127-residue protein sequence, read N- to C-terminus: Large ribosomal subunit protein bL12 (127 aa).

Belongs to the bacterial ribosomal protein bL12 family. Homodimer. Part of the ribosomal stalk of the 50S ribosomal subunit. Forms a multimeric L10(L12)X complex, where L10 forms an elongated spine to which 2 to 4 L12 dimers bind in a sequential fashion. Binds GTP-bound translation factors.

Functionally, forms part of the ribosomal stalk which helps the ribosome interact with GTP-bound translation factors. Is thus essential for accurate translation. The protein is Large ribosomal subunit protein bL12 of Nitratiruptor sp. (strain SB155-2).